The chain runs to 599 residues: Sulfite reductase [NADPH] flavoprotein alpha-component (599 aa).

The Flavodoxin-like domain occupies 63–201 (ITVISASQTG…LATAWRKQVV (139 aa)). FMN-binding positions include 69 to 74 (SQTGNA), 116 to 119 (STQG), and 152 to 161 (LGDTSYENFC). One can recognise an FAD-binding FR-type domain in the interval 234 to 448 (EQPLTAQLAV…IEHNDNFRLP (215 aa)). Residues Thr-322, His-356, 386-389 (RLYS), 404-406 (TVG), Tyr-410, and 419-422 (GGAS) each bind FAD. Residues 519–520 (SR), 525–529 (KVYVQ), and Asp-561 contribute to the NADP(+) site. Tyr-599 provides a ligand contact to FAD.

Belongs to the NADPH-dependent sulphite reductase flavoprotein subunit CysJ family. The protein in the N-terminal section; belongs to the flavodoxin family. This sequence in the C-terminal section; belongs to the flavoprotein pyridine nucleotide cytochrome reductase family. As to quaternary structure, alpha(8)-beta(8). The alpha component is a flavoprotein, the beta component is a hemoprotein. It depends on FAD as a cofactor. The cofactor is FMN.

It carries out the reaction hydrogen sulfide + 3 NADP(+) + 3 H2O = sulfite + 3 NADPH + 4 H(+). The protein operates within sulfur metabolism; hydrogen sulfide biosynthesis; hydrogen sulfide from sulfite (NADPH route): step 1/1. In terms of biological role, component of the sulfite reductase complex that catalyzes the 6-electron reduction of sulfite to sulfide. This is one of several activities required for the biosynthesis of L-cysteine from sulfate. The flavoprotein component catalyzes the electron flow from NADPH -&gt; FAD -&gt; FMN to the hemoprotein component. The polypeptide is Sulfite reductase [NADPH] flavoprotein alpha-component (Serratia proteamaculans (strain 568)).